Reading from the N-terminus, the 131-residue chain is Holo-[acyl-carrier-protein] synthase (131 aa).

The Mg(2+) site is built by Asp8 and Glu59.

It belongs to the P-Pant transferase superfamily. AcpS family. The cofactor is Mg(2+).

It localises to the cytoplasm. It carries out the reaction apo-[ACP] + CoA = holo-[ACP] + adenosine 3',5'-bisphosphate + H(+). Functionally, transfers the 4'-phosphopantetheine moiety from coenzyme A to a Ser of acyl-carrier-protein. In Rickettsia africae (strain ESF-5), this protein is Holo-[acyl-carrier-protein] synthase.